We begin with the raw amino-acid sequence, 437 residues long: tRNA(Ile)-lysidine synthase (437 aa).

Residue Ser22 to Ser27 participates in ATP binding.

It belongs to the tRNA(Ile)-lysidine synthase family.

Its subcellular location is the cytoplasm. The catalysed reaction is cytidine(34) in tRNA(Ile2) + L-lysine + ATP = lysidine(34) in tRNA(Ile2) + AMP + diphosphate + H(+). Ligates lysine onto the cytidine present at position 34 of the AUA codon-specific tRNA(Ile) that contains the anticodon CAU, in an ATP-dependent manner. Cytidine is converted to lysidine, thus changing the amino acid specificity of the tRNA from methionine to isoleucine. The protein is tRNA(Ile)-lysidine synthase of Xylella fastidiosa (strain 9a5c).